Here is a 185-residue protein sequence, read N- to C-terminus: Elongation factor P (185 aa).

Belongs to the elongation factor P family.

It is found in the cytoplasm. It functions in the pathway protein biosynthesis; polypeptide chain elongation. Functionally, involved in peptide bond synthesis. Stimulates efficient translation and peptide-bond synthesis on native or reconstituted 70S ribosomes in vitro. Probably functions indirectly by altering the affinity of the ribosome for aminoacyl-tRNA, thus increasing their reactivity as acceptors for peptidyl transferase. The polypeptide is Elongation factor P (Limosilactobacillus fermentum (strain NBRC 3956 / LMG 18251) (Lactobacillus fermentum)).